Reading from the N-terminus, the 503-residue chain is Cytochrome P450 3A14 (503 aa).

Cysteine 442 provides a ligand contact to heme.

It belongs to the cytochrome P450 family. The cofactor is heme.

It localises to the endoplasmic reticulum membrane. It is found in the microsome membrane. It carries out the reaction an organic molecule + reduced [NADPH--hemoprotein reductase] + O2 = an alcohol + oxidized [NADPH--hemoprotein reductase] + H2O + H(+). In terms of biological role, cytochromes P450 are a group of heme-thiolate monooxygenases. In liver microsomes, this enzyme is involved in an NADPH-dependent electron transport pathway. It oxidizes a variety of structurally unrelated compounds, including steroids, fatty acids, and xenobiotics. This is Cytochrome P450 3A14 (CYP3A14) from Cavia porcellus (Guinea pig).